The sequence spans 611 residues: U-box domain-containing protein 12 (611 aa).

The U-box domain maps to 227-301 (IIPDEFRCPI…SQWCEANGIE (75 aa)). ARM repeat units lie at residues 355–394 (VNNR…NLSI), 396–435 (ENNK…SLSV), 437–476 (DENK…NLCI), and 478–517 (QGNK…ILAG).

The enzyme catalyses S-ubiquitinyl-[E2 ubiquitin-conjugating enzyme]-L-cysteine + [acceptor protein]-L-lysine = [E2 ubiquitin-conjugating enzyme]-L-cysteine + N(6)-ubiquitinyl-[acceptor protein]-L-lysine.. It functions in the pathway protein modification; protein ubiquitination. Possesses E3 ubiquitin-protein ligase in vitro. The sequence is that of U-box domain-containing protein 12 (PUB12) from Oryza sativa subsp. japonica (Rice).